Here is a 151-residue protein sequence, read N- to C-terminus: ATP synthase subunit b' (151 aa).

A helical transmembrane segment spans residues 18-38 (TLPLMALQVVLLTFILNALFF).

The protein belongs to the ATPase B chain family. As to quaternary structure, F-type ATPases have 2 components, F(1) - the catalytic core - and F(0) - the membrane proton channel. F(1) has five subunits: alpha(3), beta(3), gamma(1), delta(1), epsilon(1). F(0) has four main subunits: a(1), b(1), b'(1) and c(10-14). The alpha and beta chains form an alternating ring which encloses part of the gamma chain. F(1) is attached to F(0) by a central stalk formed by the gamma and epsilon chains, while a peripheral stalk is formed by the delta, b and b' chains.

The protein localises to the cellular thylakoid membrane. In terms of biological role, f(1)F(0) ATP synthase produces ATP from ADP in the presence of a proton or sodium gradient. F-type ATPases consist of two structural domains, F(1) containing the extramembraneous catalytic core and F(0) containing the membrane proton channel, linked together by a central stalk and a peripheral stalk. During catalysis, ATP synthesis in the catalytic domain of F(1) is coupled via a rotary mechanism of the central stalk subunits to proton translocation. Functionally, component of the F(0) channel, it forms part of the peripheral stalk, linking F(1) to F(0). The b'-subunit is a diverged and duplicated form of b found in plants and photosynthetic bacteria. The protein is ATP synthase subunit b' of Prochlorococcus marinus (strain MIT 9313).